The sequence spans 233 residues: C-type lectin domain family 2 member D2 (233 aa).

A disordered region spans residues 1–34; that stretch reads MPSSAHLQDAPPLLSRTLTQDEEQTSLRQSSSCG. Over 1–76 the chain is Cytoplasmic; that stretch reads MPSSAHLQDA…SPESPAKLPC (76 aa). Residues 77–97 form a helical; Signal-anchor for type II membrane protein membrane-spanning segment; it reads CYGVIMVLSVAVVALSVALSV. Over 98 to 233 the chain is Extracellular; the sequence is KKTPQILTVK…KPNSYTSQCQ (136 aa). In terms of domain architecture, C-type lectin spans 119 to 228; the sequence is VGNKCYYFNE…KSICSKPNSY (110 aa). N132 carries N-linked (GlcNAc...) asparagine glycosylation.

Its subcellular location is the cell membrane. Functionally, lectin-type cell surface receptor. This is C-type lectin domain family 2 member D2 (Clec2d2) from Rattus norvegicus (Rat).